The following is a 165-amino-acid chain: Putative protein FAM86C1P (165 aa).

The protein belongs to the class I-like SAM-binding methyltransferase superfamily. EEF2KMT family. As to quaternary structure, interacts with EEF2KMT.

This is Putative protein FAM86C1P from Homo sapiens (Human).